A 556-amino-acid chain; its full sequence is Arginine--tRNA ligase (556 aa).

Positions 132–142 match the 'HIGH' region motif; the sequence is ANPTGDLHLGH.

Belongs to the class-I aminoacyl-tRNA synthetase family. As to quaternary structure, monomer.

The protein localises to the cytoplasm. It carries out the reaction tRNA(Arg) + L-arginine + ATP = L-arginyl-tRNA(Arg) + AMP + diphosphate. In Bacillus cereus (strain ATCC 10987 / NRS 248), this protein is Arginine--tRNA ligase.